The primary structure comprises 229 residues: Uracil-DNA glycosylase (229 aa).

D64 acts as the Proton acceptor in catalysis.

It belongs to the uracil-DNA glycosylase (UDG) superfamily. UNG family.

Its subcellular location is the cytoplasm. The catalysed reaction is Hydrolyzes single-stranded DNA or mismatched double-stranded DNA and polynucleotides, releasing free uracil.. Its function is as follows. Excises uracil residues from the DNA which can arise as a result of misincorporation of dUMP residues by DNA polymerase or due to deamination of cytosine. The protein is Uracil-DNA glycosylase of Geobacillus thermodenitrificans (strain NG80-2).